A 163-amino-acid chain; its full sequence is Phosphopantetheine adenylyltransferase (163 aa).

Ser-9 lines the substrate pocket. Residues 9 to 10 and His-17 each bind ATP; that span reads SF. Substrate is bound by residues Lys-41, Thr-73, and Arg-87. ATP-binding positions include 88–90, Glu-98, and 123–129; these read GLR and YSYLSSS.

It belongs to the bacterial CoaD family. Homohexamer. It depends on Mg(2+) as a cofactor.

The protein localises to the cytoplasm. The catalysed reaction is (R)-4'-phosphopantetheine + ATP + H(+) = 3'-dephospho-CoA + diphosphate. It participates in cofactor biosynthesis; coenzyme A biosynthesis; CoA from (R)-pantothenate: step 4/5. Its function is as follows. Reversibly transfers an adenylyl group from ATP to 4'-phosphopantetheine, yielding dephospho-CoA (dPCoA) and pyrophosphate. The sequence is that of Phosphopantetheine adenylyltransferase from Lachnoclostridium phytofermentans (strain ATCC 700394 / DSM 18823 / ISDg) (Clostridium phytofermentans).